The following is a 415-amino-acid chain: Serine hydroxymethyltransferase (415 aa).

(6S)-5,6,7,8-tetrahydrofolate-binding positions include L117 and 121-123 (GHL). K226 is modified (N6-(pyridoxal phosphate)lysine). (6S)-5,6,7,8-tetrahydrofolate contacts are provided by residues E241 and 349–351 (SPF).

Belongs to the SHMT family. In terms of assembly, homodimer. Pyridoxal 5'-phosphate is required as a cofactor.

It localises to the cytoplasm. The catalysed reaction is (6R)-5,10-methylene-5,6,7,8-tetrahydrofolate + glycine + H2O = (6S)-5,6,7,8-tetrahydrofolate + L-serine. The protein operates within one-carbon metabolism; tetrahydrofolate interconversion. It participates in amino-acid biosynthesis; glycine biosynthesis; glycine from L-serine: step 1/1. Its function is as follows. Catalyzes the reversible interconversion of serine and glycine with tetrahydrofolate (THF) serving as the one-carbon carrier. This reaction serves as the major source of one-carbon groups required for the biosynthesis of purines, thymidylate, methionine, and other important biomolecules. Also exhibits THF-independent aldolase activity toward beta-hydroxyamino acids, producing glycine and aldehydes, via a retro-aldol mechanism. In Geotalea uraniireducens (strain Rf4) (Geobacter uraniireducens), this protein is Serine hydroxymethyltransferase.